A 243-amino-acid polypeptide reads, in one-letter code: Transmembrane protein 174 (243 aa).

Helical transmembrane passes span 40 to 60 (LLFS…MGWI) and 73 to 93 (LLGP…VCKF).

Interacts with SLC34A1; regulates SLC34A1 internalization by PTH and FGF23. In terms of tissue distribution, kidney specific. Expressed in renal primary proximal tubule cells.

Its subcellular location is the endoplasmic reticulum membrane. The protein localises to the apical cell membrane. Regulator of plasma phosphate homeostasis. Decreases serum inorganic phosphate (Pi) uptake by regulating the sodium-phosphate cotransporter SLC34A1 trafficking by PTH and FGF23 in the kidney. The polypeptide is Transmembrane protein 174 (Tmem174) (Mus musculus (Mouse)).